Consider the following 161-residue polypeptide: Allophycocyanin beta chain (161 aa).

Asn71 carries the N4-methylasparagine modification. Position 81 (Cys81) interacts with (2R,3E)-phycocyanobilin.

This sequence belongs to the phycobiliprotein family. As to quaternary structure, heterodimer of an alpha and a beta chain. Post-translationally, contains one covalently linked phycocyanobilin chromophore.

The protein resides in the plastid. It localises to the chloroplast thylakoid membrane. In terms of biological role, light-harvesting photosynthetic bile pigment-protein from the phycobiliprotein complex. Allophycocyanin has a maximum absorption at approximately 650 nanometers. This Pyropia haitanensis (Red seaweed) protein is Allophycocyanin beta chain (apcB).